Here is a 509-residue protein sequence, read N- to C-terminus: Dihydrolipoyl dehydrogenase, mitochondrial (509 aa).

The transit peptide at 1 to 35 (MQSWSRVYCSLAKRGHFNRISHGLQGLSAVPLRTY) directs the protein to the mitochondrion. N6-acetyllysine; alternate is present on Lys66. The residue at position 66 (Lys66) is an N6-succinyllysine; alternate. FAD-binding positions include 71-80 (EKNETLGGTC) and Lys89. A disulfide bridge connects residues Cys80 and Cys85. N6-acetyllysine; alternate is present on residues Lys104, Lys122, Lys132, and Lys143. Residues Lys104, Lys122, Lys132, and Lys143 each carry the N6-succinyllysine; alternate modification. Gly154 provides a ligand contact to FAD. N6-succinyllysine occurs at positions 159 and 166. 183-185 (TGS) lines the FAD pocket. Residues 220 to 227 (GAGVIGVE) and Glu243 each bind NAD(+). Lys273 and Lys277 each carry N6-succinyllysine. Val278 is a binding site for NAD(+). A phosphoserine mark is found at Ser285 and Ser297. An NAD(+)-binding site is contributed by Gly314. The residue at position 346 (Lys346) is an N6-acetyllysine. FAD contacts are provided by residues Asp355 and 361-364 (MLAH). Lys410 bears the N6-acetyllysine; alternate mark. Lys410 carries the post-translational modification N6-succinyllysine; alternate. An N6-acetyllysine mark is found at Lys417 and Lys420. N6-succinyllysine is present on Lys430. His487 acts as the Proton acceptor in catalysis. Ser502 bears the Phosphoserine mark. Lys505 is modified (N6-acetyllysine; alternate). Lys505 is subject to N6-succinyllysine; alternate.

It belongs to the class-I pyridine nucleotide-disulfide oxidoreductase family. As to quaternary structure, homodimer. Part of the multimeric pyruvate dehydrogenase complex that contains multiple copies of pyruvate dehydrogenase (subunits PDHA (PDHA1 or PDHA2) and PDHB, E1), dihydrolipoamide acetyltransferase (DLAT, E2) and lipoamide dehydrogenase (DLD, E3). These subunits are bound to an inner core composed of about 48 DLAT and 12 PDHX molecules (by non covalent bonds). The 2-oxoglutarate dehydrogenase complex is composed of OGDH (2-oxoglutarate dehydrogenase; E1), DLST (dihydrolipoamide succinyltransferase; E2), DLD (dihydrolipoamide dehydrogenase; E3) and the assembly factor KGD4. It contains multiple copies of the three enzymatic components (E1, E2 and E3). In the nucleus, the 2-oxoglutarate dehydrogenase complex associates with KAT2A. Interacts with PDHX. FAD serves as cofactor. Tyrosine phosphorylated.

The protein resides in the mitochondrion matrix. It localises to the nucleus. The protein localises to the cell projection. Its subcellular location is the cilium. It is found in the flagellum. The protein resides in the cytoplasmic vesicle. It localises to the secretory vesicle. The protein localises to the acrosome. It carries out the reaction N(6)-[(R)-dihydrolipoyl]-L-lysyl-[protein] + NAD(+) = N(6)-[(R)-lipoyl]-L-lysyl-[protein] + NADH + H(+). Disruption of native heterodimer state inhibits primary dihydrolipoamide dehydrogenase activity and induces serine protease activity. In terms of biological role, lipoamide dehydrogenase is a component of the glycine cleavage system as well as an E3 component of three alpha-ketoacid dehydrogenase complexes (pyruvate-, alpha-ketoglutarate-, and branched-chain amino acid-dehydrogenase complex). The 2-oxoglutarate dehydrogenase complex is mainly active in the mitochondrion. A fraction of the 2-oxoglutarate dehydrogenase complex also localizes in the nucleus and is required for lysine succinylation of histones: associates with KAT2A on chromatin and provides succinyl-CoA to histone succinyltransferase KAT2A. In monomeric form may have additional moonlighting function as serine protease. Involved in the hyperactivation of spermatazoa during capacitation and in the spermatazoal acrosome reaction. In Homo sapiens (Human), this protein is Dihydrolipoyl dehydrogenase, mitochondrial (DLD).